A 320-amino-acid polypeptide reads, in one-letter code: Replication-associated protein ORF2 (320 aa).

Residues tyrosine 188 and tyrosine 192 each act as O-(5'-phospho-DNA)-tyrosine intermediate in the active site.

It belongs to the microviridae Rep protein family.

The catalysed reaction is ATP + (deoxyribonucleotide)n-3'-hydroxyl + 5'-phospho-(deoxyribonucleotide)m = (deoxyribonucleotide)n+m + AMP + diphosphate.. Functionally, plays an essential role in viral DNA replication. Binds the origin of replication and cleaves the dsDNA replicative form I (RFI) and becomes covalently bound to it via phosphotyrosine bond, generating the dsDNA replicative form II (RFII). In turn, viral DNA replication initiates at the 3'-OH of the cleavage site. After one round of rolling circle synthesis, protein ORF2 is linked to the newly synthesized ssDNA and joins the ends of the displaced strand to generate a circular single-stranded molecule ready to be packed into a virion. This chain is Replication-associated protein ORF2, found in Spiroplasma virus 4 (SpV4).